The following is a 599-amino-acid chain: ATP-dependent rRNA helicase SPB4 (599 aa).

The Q motif signature appears at 7-35; it reads WDTLDYTLQPWIRTAVDAMGYETMTPVQA. One can recognise a Helicase ATP-binding domain in the interval 38-224; that stretch reads IPLFARNKDV…KTGMRNPVKV (187 aa). Residue 51–58 participates in ATP binding; it reads SVTGSGKT. The DEAD box signature appears at 172-175; the sequence is DEAD. The Helicase C-terminal domain maps to 248–415; it reads KLQLLLTLLN…GLPEIIRAWI (168 aa). Residues 501–561 adopt a coiled-coil conformation; sequence QREKARKLAK…LKRKAIEEKL (61 aa). Residues 559-599 form a disordered region; that stretch reads EKLIENSDDSDNEVETDWKDIVRQRKKKKTNSGMQGDFGDL. The span at 564 to 573 shows a compositional bias: acidic residues; that stretch reads NSDDSDNEVE.

The protein belongs to the DEAD box helicase family. DDX55/SPB4 subfamily. Component of pre-60S ribosomal complexes.

It is found in the nucleus. The protein resides in the nucleolus. The catalysed reaction is ATP + H2O = ADP + phosphate + H(+). In terms of biological role, ATP-binding RNA helicase involved in the biogenesis of 60S ribosomal subunits. Binds 90S pre-ribosomal particles and dissociates from pre-60S ribosomal particles after processing of 27SB pre-rRNA. Required for the normal formation of 18S rRNA through the processing of pre-rRNAs at sites A0, A1 and A2, and the normal formation of 25S and 5.8S rRNAs through the processing of pre-rRNAs at sites C1 and C2. The polypeptide is ATP-dependent rRNA helicase SPB4 (Eremothecium gossypii (strain ATCC 10895 / CBS 109.51 / FGSC 9923 / NRRL Y-1056) (Yeast)).